Reading from the N-terminus, the 243-residue chain is NAD-dependent protein deacetylase (243 aa).

A Deacetylase sirtuin-type domain is found at 1-243 (MKHDLETLKH…VSVVKSLMTE (243 aa)). 7 residues coordinate NAD(+): alanine 24, phenylalanine 35, arginine 36, glutamine 105, isoleucine 107, aspartate 108, and histidine 123. Phenylalanine 35 lines the nicotinamide pocket. Positions 107 and 108 each coordinate nicotinamide. The Proton acceptor role is filled by histidine 123. Residues cysteine 131, cysteine 134, cysteine 151, and cysteine 154 each contribute to the Zn(2+) site. NAD(+) is bound by residues serine 192, serine 193, asparagine 215, and aspartate 232.

Belongs to the sirtuin family. Class U subfamily. The cofactor is Zn(2+).

The protein resides in the cytoplasm. It carries out the reaction N(6)-acetyl-L-lysyl-[protein] + NAD(+) + H2O = 2''-O-acetyl-ADP-D-ribose + nicotinamide + L-lysyl-[protein]. Its function is as follows. NAD-dependent protein deacetylase which modulates the activities of several enzymes which are inactive in their acetylated form. The chain is NAD-dependent protein deacetylase from Staphylococcus aureus (strain MRSA252).